Reading from the N-terminus, the 261-residue chain is Indole-3-glycerol phosphate synthase (261 aa).

It belongs to the TrpC family.

The catalysed reaction is 1-(2-carboxyphenylamino)-1-deoxy-D-ribulose 5-phosphate + H(+) = (1S,2R)-1-C-(indol-3-yl)glycerol 3-phosphate + CO2 + H2O. It functions in the pathway amino-acid biosynthesis; L-tryptophan biosynthesis; L-tryptophan from chorismate: step 4/5. This Burkholderia multivorans (strain ATCC 17616 / 249) protein is Indole-3-glycerol phosphate synthase.